The following is a 225-amino-acid chain: PKHD-type hydroxylase HEAR3399 (225 aa).

The Fe2OG dioxygenase domain maps to 77-177 (RYMPPLFNRY…RVCSFFWLQS (101 aa)). Residues His95, Asp97, and His158 each contribute to the Fe cation site. Arg168 is a 2-oxoglutarate binding site.

Fe(2+) is required as a cofactor. L-ascorbate serves as cofactor.

In Herminiimonas arsenicoxydans, this protein is PKHD-type hydroxylase HEAR3399.